Reading from the N-terminus, the 2591-residue chain is Eukaryotic translation initiation factor 2-alpha kinase PK4 (2591 aa).

At 1 to 16 the chain is on the cytoplasmic side; sequence MYNKGINICLNEDNKC. Residues 17-37 form a helical membrane-spanning segment; sequence IILLHIIFNKCIVSFVASHIL. The Lumenal portion of the chain corresponds to 38–1488; sequence VEGKICFLNR…EFSSQKHKKS (1451 aa). The disordered stretch occupies residues 1028-1048; that stretch reads KKKRNSKKGENRNKKRKTQKR. Residues 1489 to 1509 traverse the membrane as a helical segment; that stretch reads WYWNIFYAITLVIVIPFIFIY. Residues 1510 to 2591 are Cytoplasmic-facing; sequence RLFKKQTNNK…NIINGNEVDH (1082 aa). A disordered region spans residues 1781 to 1840; sequence NLNSADEENKSPYAKKYSDEKKNRSKSSKYIENTQSNNNDNTNGNMNVGNHINNDKMNNK. Residues 1813–1832 show a composition bias toward low complexity; it reads NTQSNNNDNTNGNMNVGNHI. ATP contacts are provided by residues 1880–1888 and Lys1905; that span reads IGQGGFGSV. Disordered regions lie at residues 2123–2157 and 2183–2212; these read DNDE…GGDI and IKNT…TNNN. The span at 2134 to 2143 shows a compositional bias: basic and acidic residues; sequence KKNDNDERKS. Residues 2181–2532 enclose the Protein kinase domain; sequence MTIKNTQGTS…KIKVLLDPHL (352 aa). The active-site Proton acceptor is the Asp2369. Residue Thr2436 is modified to Phosphothreonine; by autocatalysis. Polar residues predominate over residues 2558-2574; that stretch reads STNPNGDIKENVNQNNL. The segment at 2558-2591 is disordered; that stretch reads STNPNGDIKENVNQNNLVDDKGNNNIINGNEVDH. Residues 2580-2591 are compositionally biased toward low complexity; the sequence is NNNIINGNEVDH.

The protein belongs to the protein kinase superfamily. Ser/Thr protein kinase family. GCN2 subfamily. May form oligomers in response to stress; oligomerization may result in catalytic activity. Interacts with BIP; the interaction is disrupted in response to stress.

It is found in the endoplasmic reticulum membrane. It catalyses the reaction L-seryl-[protein] + ATP = O-phospho-L-seryl-[protein] + ADP + H(+). The catalysed reaction is L-threonyl-[protein] + ATP = O-phospho-L-threonyl-[protein] + ADP + H(+). Dissociation from BIP and oligomerization, may results autophosphorylation and kinase activity induction. During the asexual blood stage, phosphorylates translation factor eIF2alpha in late schizonts resulting in protein translation inhibition. Plays a role in trophozoite differentiation into schizonts. This chain is Eukaryotic translation initiation factor 2-alpha kinase PK4, found in Plasmodium berghei (strain Anka).